The sequence spans 432 residues: Enolase (432 aa).

Q167 lines the (2R)-2-phosphoglycerate pocket. The active-site Proton donor is E209. Residues D246, E290, and D317 each contribute to the Mg(2+) site. 4 residues coordinate (2R)-2-phosphoglycerate: K342, R371, S372, and K393. K342 serves as the catalytic Proton acceptor.

The protein belongs to the enolase family. Component of the RNA degradosome, a multiprotein complex involved in RNA processing and mRNA degradation. Requires Mg(2+) as cofactor.

It is found in the cytoplasm. Its subcellular location is the secreted. The protein localises to the cell surface. The enzyme catalyses (2R)-2-phosphoglycerate = phosphoenolpyruvate + H2O. It functions in the pathway carbohydrate degradation; glycolysis; pyruvate from D-glyceraldehyde 3-phosphate: step 4/5. Catalyzes the reversible conversion of 2-phosphoglycerate (2-PG) into phosphoenolpyruvate (PEP). It is essential for the degradation of carbohydrates via glycolysis. In Escherichia coli O139:H28 (strain E24377A / ETEC), this protein is Enolase.